The following is a 75-amino-acid chain: uncharacterized protein (75 aa).

This is an uncharacterized protein from Escherichia coli O6:H1 (strain CFT073 / ATCC 700928 / UPEC).